The following is a 44-amino-acid chain: Thrombin-like enzyme F202 (44 aa).

Residues 1–44 (VVGGDECNINEHRFLVALYANSSLLCGGTLINQEWVLIAAHCDR) enclose the Peptidase S1 domain. Cys-26 and Cys-42 are oxidised to a cystine. The active-site Charge relay system is His-41.

Belongs to the peptidase S1 family. Snake venom subfamily. In terms of assembly, monomer. Post-translationally, contains 6 disulfide bonds. In terms of tissue distribution, expressed by the venom gland.

It is found in the secreted. Enzyme activity is markedly inhibited by TLCK and PMSF, and moderately by SBTi. Platelet aggregating activity is strongly inhibited by TLCK. Thrombin-like snake venom serine protease that coagulates fibrinogen by inducing a fast degradation of the alpha chain (FGA) from human citrated plasma, and a slow degradation of beta chain (FGB). Potently induces platelet aggregation in both platelet rich plasma and washed platelet preparations in a concentration-dependent fashion. Shows amidolytic activities. In Crotalus durissus cascavella (Northeastern Brazilian rattlesnake), this protein is Thrombin-like enzyme F202.